The sequence spans 341 residues: Tetraacyldisaccharide 4'-kinase (341 aa).

Threonine 54–threonine 61 is a binding site for ATP.

It belongs to the LpxK family.

It catalyses the reaction a lipid A disaccharide + ATP = a lipid IVA + ADP + H(+). Its pathway is glycolipid biosynthesis; lipid IV(A) biosynthesis; lipid IV(A) from (3R)-3-hydroxytetradecanoyl-[acyl-carrier-protein] and UDP-N-acetyl-alpha-D-glucosamine: step 6/6. Transfers the gamma-phosphate of ATP to the 4'-position of a tetraacyldisaccharide 1-phosphate intermediate (termed DS-1-P) to form tetraacyldisaccharide 1,4'-bis-phosphate (lipid IVA). This Mesorhizobium japonicum (strain LMG 29417 / CECT 9101 / MAFF 303099) (Mesorhizobium loti (strain MAFF 303099)) protein is Tetraacyldisaccharide 4'-kinase.